The chain runs to 2157 residues: Polyketide synthase 2 (2157 aa).

An N-terminal acylcarrier protein transacylase domain (SAT) region spans residues 7-244; that stretch reads FIFGDQTGGF…IPIPIWAPYH (238 aa). The Ketosynthase family 3 (KS3) domain occupies 374–807; it reads DAKIAIIGMS…GGNSALLLED (434 aa). Residues cysteine 546, histidine 681, and histidine 723 each act as for beta-ketoacyl synthase activity in the active site. Positions 908–1213 are malonyl-CoA:ACP transacylase (MAT) domain; sequence GFVFSGQGAQ…ASLHRKDDGW (306 aa). The active-site For acyl/malonyl transferase activity is serine 998. Positions 1290 to 1605 are product template (PT) domain; sequence TSSVQKIIQQ…RSLLNKVLPP (316 aa). Positions 1294–1428 are N-terminal hotdog fold; sequence QKIIQQTDGP…CLLCFADPNS (135 aa). Residues 1294–1600 form the PKS/mFAS DH domain; sequence QKIIQQTDGP…FLGMSRSLLN (307 aa). The active-site Proton acceptor; for dehydratase activity is the histidine 1327. The segment at 1455–1600 is C-terminal hotdog fold; sequence TDSLLSKGIV…FLGMSRSLLN (146 aa). Catalysis depends on aspartate 1514, which acts as the Proton donor; for dehydratase activity. A disordered region spans residues 1629–1653; the sequence is AKDTERRPLDIPTRAQRQPNSPPTG. Positions 1649–1726 constitute a Carrier 1 domain; sequence SPPTGTLGRI…ELKEFLGADQ (78 aa). Position 1686 is an O-(pantetheine 4'-phosphoryl)serine (serine 1686). Residues 1729–1765 form a disordered region; it reads DDAVACESSNGQHTPQTSDKGSGTLAAQKPDDDTGSD. The segment covering 1735–1749 has biased composition (polar residues); it reads ESSNGQHTPQTSDKG. One can recognise a Carrier 2 domain in the interval 1765–1839; it reads DTTLHRVCAI…SLQKALCGTE (75 aa). Serine 1799 carries the post-translational modification O-(pantetheine 4'-phosphoryl)serine. The interval 1875-2151 is thioesterase (TE) domain; that stretch reads ASPPHATSIL…MAEMGDLIGE (277 aa). The active-site For thioesterase activity is serine 1981.

Polyketide synthase; part of the Pks2 gene cluster that mediates the formation of infectious structures (appressoria), enabling these fungi to kill insects faster. The product of the Pks2 gene cluster is different from the one of Pks1 and has still not been identified. The polypeptide is Polyketide synthase 2 (Metarhizium guizhouense (strain ARSEF 977)).